A 109-amino-acid chain; its full sequence is Protein reprimo (109 aa).

Residues asparagine 7 and asparagine 18 are each glycosylated (N-linked (GlcNAc...) asparagine). The chain crosses the membrane as a helical span at residues 56-76 (VVQIAVMCVLSLTVVFGIFFL). Position 98 is a phosphoserine (serine 98).

This sequence belongs to the reprimo family.

The protein localises to the cytoplasm. The protein resides in the membrane. Functionally, may be involved in the regulation of p53-dependent G2 arrest of the cell cycle. Seems to induce cell cycle arrest by inhibiting CDK1 activity and nuclear translocation of the CDC2 cyclin B1 complex. The chain is Protein reprimo (Rprm) from Mus musculus (Mouse).